The sequence spans 339 residues: Serine/threonine-protein kinase SAPK2 (339 aa).

A Protein kinase domain is found at 4–260 (YEVIKDIGSG…IPEIKNHPWF (257 aa)). Residues 10–18 (IGSGNFGVA) and Lys-33 contribute to the ATP site. Asp-123 serves as the catalytic Proton acceptor. A C-terminal region spans residues 253-339 (EIKNHPWFLK…EDSGDFVCAL (87 aa)).

This sequence belongs to the protein kinase superfamily. Ser/Thr protein kinase family. As to quaternary structure, interacts with BZIP46. Interacts with ABI5 and PP2C30. Interacts with PP2C51. In terms of processing, phosphorylated. As to expression, expressed in leaf blades, leaf sheaths and roots. Expressed in shoots and roots of young seedlings.

It is found in the cytoplasm. Its subcellular location is the nucleus. The catalysed reaction is L-seryl-[protein] + ATP = O-phospho-L-seryl-[protein] + ADP + H(+). It carries out the reaction L-threonyl-[protein] + ATP = O-phospho-L-threonyl-[protein] + ADP + H(+). With respect to regulation, activated by phosphorylation in response to hyperosmotic stress within 5 minutes. May play a role in signal transduction of hyperosmotic response. Can phosphorylate BZIP46 in vitro. Together with ABI5, PP2C30 and PYL5, is part of an abscisic acid (ABA) signaling unit that modulates seed germination and early seedling growth. This is Serine/threonine-protein kinase SAPK2 (SAPK2) from Oryza sativa subsp. japonica (Rice).